Here is a 344-residue protein sequence, read N- to C-terminus: Methionine import ATP-binding protein MetN 1 (344 aa).

Residues 2 to 241 (IEIRNLSQRF…PHHEVTRALI (240 aa)) form the ABC transporter domain. 38–45 (GRSGAGKS) contacts ATP.

The protein belongs to the ABC transporter superfamily. Methionine importer (TC 3.A.1.24) family. As to quaternary structure, the complex is composed of two ATP-binding proteins (MetN), two transmembrane proteins (MetI) and a solute-binding protein (MetQ).

It localises to the cell inner membrane. The catalysed reaction is L-methionine(out) + ATP + H2O = L-methionine(in) + ADP + phosphate + H(+). It carries out the reaction D-methionine(out) + ATP + H2O = D-methionine(in) + ADP + phosphate + H(+). In terms of biological role, part of the ABC transporter complex MetNIQ involved in methionine import. Responsible for energy coupling to the transport system. This Burkholderia mallei (strain ATCC 23344) protein is Methionine import ATP-binding protein MetN 1.